Reading from the N-terminus, the 293-residue chain is Germ cell-specific gene 1-like protein 2 (293 aa).

The Cytoplasmic segment spans residues 1–8; it reads MDRAKQQQ. The chain crosses the membrane as a helical span at residues 9–29; sequence ALLLLPVCLALTFSLTAVVSS. Over 30 to 120 the chain is Extracellular; that stretch reads HWCEGTRRVV…RSVVPAEEQG (91 aa). N-linked (GlcNAc...) asparagine glycans are attached at residues Asn59 and Asn67. A helical membrane pass occupies residues 121 to 141; that stretch reads VLWLSIGGEVLDIVLILTSAI. Residues 142–160 are Cytoplasmic-facing; it reads LLGSRVSCRSPGFHWLRVD. The helical transmembrane segment at 161-181 threads the bilayer; it reads ALVAIFMVLAGLLGMVAHMMY. Topologically, residues 182–204 are extracellular; sequence TTIFQITVNLGPEDWKPQTWDYG. A helical membrane pass occupies residues 205–225; the sequence is WSYCLAWGSFALCLAVSVSAM. Residues 226–293 are Cytoplasmic-facing; sequence SRFTAARLEF…PGAPGKVSIC (68 aa).

This sequence belongs to the GSG1 family.

The protein resides in the membrane. This chain is Germ cell-specific gene 1-like protein 2, found in Homo sapiens (Human).